The sequence spans 361 residues: MQERHTEQDYRALLIADTPIIDVRAPIEFEQGAMPAAINLPLMNNDERAAVGICYKQQGSDAALALGHKLVAGEIRQQRMDAWRAACLQNPHGILCCARGGQRSHIVQRWLHDAGIDYPLVEGGYKALRQTAIQATIELAQKPIVLIGGCTGSGKTLLVQQQPNGVDLEGLARHRGSAFGRTLQPQLSQASFENMLAAEMLKTDAHQDLRLWVLEDESRMIGSNHLPECLRERMTQATIAVVEDPFEIRLERLNEEYFLRMHHDFTHAYGDEQGWQEYCEYLHHGLSAIKRRLGLQRYNELAARLDAALTTQLTTGSTDGHLAWLVPLLEEYYDPMYRYQLEKKAEKVVFRGEWAGSGGMG.

Positions L14–I137 constitute a Rhodanese domain. C97 serves as the catalytic S-selanylcysteine intermediate.

Belongs to the SelU family. Monomer.

It carries out the reaction 5-methylaminomethyl-2-thiouridine(34) in tRNA + selenophosphate + (2E)-geranyl diphosphate + H2O + H(+) = 5-methylaminomethyl-2-selenouridine(34) in tRNA + (2E)-thiogeraniol + phosphate + diphosphate. The catalysed reaction is 5-methylaminomethyl-2-thiouridine(34) in tRNA + (2E)-geranyl diphosphate = 5-methylaminomethyl-S-(2E)-geranyl-thiouridine(34) in tRNA + diphosphate. The enzyme catalyses 5-methylaminomethyl-S-(2E)-geranyl-thiouridine(34) in tRNA + selenophosphate + H(+) = 5-methylaminomethyl-2-(Se-phospho)selenouridine(34) in tRNA + (2E)-thiogeraniol. It catalyses the reaction 5-methylaminomethyl-2-(Se-phospho)selenouridine(34) in tRNA + H2O = 5-methylaminomethyl-2-selenouridine(34) in tRNA + phosphate. In terms of biological role, involved in the post-transcriptional modification of the uridine at the wobble position (U34) of tRNA(Lys), tRNA(Glu) and tRNA(Gln). Catalyzes the conversion of 2-thiouridine (S2U-RNA) to 2-selenouridine (Se2U-RNA). Acts in a two-step process involving geranylation of 2-thiouridine (S2U) to S-geranyl-2-thiouridine (geS2U) and subsequent selenation of the latter derivative to 2-selenouridine (Se2U) in the tRNA chain. This chain is tRNA 2-selenouridine synthase, found in Escherichia coli O6:H1 (strain CFT073 / ATCC 700928 / UPEC).